The following is a 537-amino-acid chain: Hydroxylamine reductase (537 aa).

Positions 3, 6, 15, and 21 each coordinate [4Fe-4S] cluster. Hybrid [4Fe-2O-2S] cluster is bound by residues H239, E263, C307, C393, C421, C446, E480, and K482. Cysteine persulfide is present on C393.

Belongs to the HCP family. The cofactor is [4Fe-4S] cluster. Requires hybrid [4Fe-2O-2S] cluster as cofactor.

It is found in the cytoplasm. It catalyses the reaction A + NH4(+) + H2O = hydroxylamine + AH2 + H(+). Its function is as follows. Catalyzes the reduction of hydroxylamine to form NH(3) and H(2)O. The chain is Hydroxylamine reductase from Lawsonia intracellularis (strain PHE/MN1-00).